A 179-amino-acid polypeptide reads, in one-letter code: Apoptosis regulator Bcl-2 homolog (179 aa).

Residues 76–95 carry the BH1 motif; the sequence is ELFKDLINWGRICGFIVFSA. The BH2 signature appears at 126-141; it reads PWMISHGGQEEFLAFS.

The protein belongs to the Bcl-2 family. As to quaternary structure, interacts with host BECN1 (via BH3 homology domain); this interaction allows the virus to inhibit BECN1, and thus autophagy. Interacts with host BID. Interacts with host BAX.

The protein localises to the host mitochondrion. Its subcellular location is the host endoplasmic reticulum. Suppresses apoptosis in host cell to promote the viral replication. Has the ability to potentially bind to all the members of the proapoptotic Bcl-2 family. Inhibits autophagy by interacting with host Beclin 1 (BECN1). This African swine fever virus (isolate Pig/Kenya/KEN-50/1950) (ASFV) protein is Apoptosis regulator Bcl-2 homolog.